The primary structure comprises 486 residues: N-succinylglutamate 5-semialdehyde dehydrogenase (486 aa).

220–225 contacts NAD(+); it reads GSSRTG. Residues E243 and C277 contribute to the active site.

This sequence belongs to the aldehyde dehydrogenase family. AstD subfamily.

It catalyses the reaction N-succinyl-L-glutamate 5-semialdehyde + NAD(+) + H2O = N-succinyl-L-glutamate + NADH + 2 H(+). It functions in the pathway amino-acid degradation; L-arginine degradation via AST pathway; L-glutamate and succinate from L-arginine: step 4/5. Catalyzes the NAD-dependent reduction of succinylglutamate semialdehyde into succinylglutamate. This chain is N-succinylglutamate 5-semialdehyde dehydrogenase, found in Shewanella baltica (strain OS223).